A 479-amino-acid polypeptide reads, in one-letter code: Sucrose-6-phosphate hydrolase (479 aa).

A disordered region spans residues 1–28; it reads MTAHDQELRRRAYEEVEKKEPIANSDPH. Substrate is bound by residues 40 to 43, glutamine 59, 102 to 103, 161 to 162, and glutamate 220; these read LLND, YS, and RD. Aspartate 43 is an active-site residue.

It belongs to the glycosyl hydrolase 32 family.

The catalysed reaction is Hydrolysis of terminal non-reducing beta-D-fructofuranoside residues in beta-D-fructofuranosides.. It participates in glycan biosynthesis; sucrose metabolism. This chain is Sucrose-6-phosphate hydrolase (sacA), found in Bacillus subtilis (strain 168).